The sequence spans 489 residues: Squalene monooxygenase (489 aa).

A helical membrane pass occupies residues 10 to 30 (VTYDALIVGAGVIGPCVATAL). FAD-binding positions include 21–22 (VI), 41–42 (ER), R49, R151, V167, D328, and M341. 2 helical membrane passes run 426 to 446 (FLAG…AVAF) and 464 to 484 (ALLE…PFLV).

Belongs to the squalene monooxygenase family. The cofactor is FAD.

Its subcellular location is the microsome membrane. The protein localises to the endoplasmic reticulum membrane. It carries out the reaction squalene + reduced [NADPH--hemoprotein reductase] + O2 = (S)-2,3-epoxysqualene + oxidized [NADPH--hemoprotein reductase] + H2O + H(+). It functions in the pathway terpene metabolism; lanosterol biosynthesis; lanosterol from farnesyl diphosphate: step 2/3. Functionally, catalyzes the stereospecific oxidation of squalene to (S)-2,3-epoxysqualene, and is considered to be a rate-limiting enzyme in steroid biosynthesis. The chain is Squalene monooxygenase (ERG1) from Candida glabrata (strain ATCC 2001 / BCRC 20586 / JCM 3761 / NBRC 0622 / NRRL Y-65 / CBS 138) (Yeast).